The following is a 78-amino-acid chain: Small nuclear ribonucleoprotein F (78 aa).

In terms of domain architecture, Sm spans 7–78 (NPKPFLQGLI…NVLWVGESTV (72 aa)).

It belongs to the snRNP Sm proteins family. SmF/LSm6 subfamily. As to quaternary structure, belongs to the 40S cdc5-associated complex (or cwf complex), a spliceosome sub-complex reminiscent of a late-stage spliceosome composed of the U2, U5 and U6 snRNAs and at least brr2, cdc5, cwf2/prp3, cwf3/syf1, cwf4/syf3, cwf5/ecm2, spp42/cwf6, cwf7/spf27, cwf8, cwf9, cwf10, cwf11, cwf12, prp45/cwf13, cwf14, cwf15, cwf16, cwf17, cwf18, cwf19, cwf20, cwf21, cwf22, cwf23, cwf24, cwf25, cwf26, cyp7/cwf27, cwf28, cwf29/ist3, lea1, msl1, prp5/cwf1, prp10, prp12/sap130, prp17, prp22, sap61, sap62, sap114, sap145, slu7, smb1, smd1, smd3, smf1, smg1 and syf2.

It is found in the nucleus. The protein resides in the cytoplasm. Plays a role in pre-mRNA splicing as a core component of the spliceosomal U1, U2, U4 and U5 small nuclear ribonucleoproteins (snRNPs), the building blocks of the spliceosome. This is Small nuclear ribonucleoprotein F (smf1) from Schizosaccharomyces pombe (strain 972 / ATCC 24843) (Fission yeast).